The chain runs to 559 residues: Potassium-transporting ATPase potassium-binding subunit (559 aa).

A run of 13 helical transmembrane segments spans residues 5-25 (GFLL…PLGS), 27-47 (LARL…RILW), 63-83 (LLAL…LLFW), 132-152 (GLTV…FALI), 170-190 (LVRI…LFFI), 253-273 (LAQM…FGEA), 283-303 (LLWA…WAEV), 327-347 (FGVL…CGAV), 356-376 (ALGG…FGGV), 379-399 (GLYG…LMIG), 416-436 (MTAL…ALAM), 484-504 (LLAF…MAIA), and 524-544 (GALF…LTFI).

This sequence belongs to the KdpA family. In terms of assembly, the system is composed of three essential subunits: KdpA, KdpB and KdpC.

It localises to the cell inner membrane. Its function is as follows. Part of the high-affinity ATP-driven potassium transport (or Kdp) system, which catalyzes the hydrolysis of ATP coupled with the electrogenic transport of potassium into the cytoplasm. This subunit binds the periplasmic potassium ions and delivers the ions to the membrane domain of KdpB through an intramembrane tunnel. The chain is Potassium-transporting ATPase potassium-binding subunit from Salmonella typhi.